A 326-amino-acid polypeptide reads, in one-letter code: WRKY transcription factor 8 (326 aa).

The interval 115 to 172 is disordered; it reads VRVSASPSSSEADHHPGEDSGKIRKKREVRDGGEDDQRSQKVVKTKKKEEKKKEPRVS. Basic and acidic residues-rich tracts occupy residues 125 to 153 and 161 to 170; these read EADH…DQRS and KKEEKKKEPR. A DNA-binding region (WRKY) is located at residues 177-242; the sequence is TEVDHLEDGY…YESQHNHPIP (66 aa).

This sequence belongs to the WRKY group II-c family. Interacts with VQ9 (via N-terminus). As to expression, highly expressed in roots and at lower levels in rosette leaves, cauline leaves, stems, flowers and siliques.

The protein resides in the nucleus. Transcription factor. Interacts specifically with the W box (5'-TTGAC[CT]-3'), a frequently occurring stress-responsive cis-acting element. Functions as a positive regulator of salt stress response. Binds the W box of LTI78/RD29A stress-response gene and directly regulates its transcription under salt stress. Functions antagonistically with VQ9 to regulate sodium and potassium homeostasis under salt stress by regulating the expression of downstream SOS (SALT OVERLY SENSITIVE) stress-responsive genes. The DNA-binding activity of WRKY8 is decreased by VQ9. Functions as a negative regulator of basal resistance to the bacterial pathogen P.syringae and as positive regulator of resistance to the fungal pathogen to B.cinerea. Functions as a positive regulator of defense response againt tobamovirus (TMV) by regulating both the abscisic acid and ethylene signaling pathways. Positively regulates ABI4 expression and negatively modulates ACS6 and ERF104 expression by directly binding to the W box consensus motifs within their promoters. This Arabidopsis thaliana (Mouse-ear cress) protein is WRKY transcription factor 8 (WRKY8).